We begin with the raw amino-acid sequence, 353 residues long: 3-dehydroquinate synthase (353 aa).

Residues 60–65 (AGDMNK), 94–98 (GMITD), 118–119 (TT), lysine 131, and lysine 140 each bind NAD(+). The Zn(2+) site is built by glutamate 173, histidine 234, and histidine 253.

Belongs to the sugar phosphate cyclases superfamily. Dehydroquinate synthase family. Requires NAD(+) as cofactor. Co(2+) serves as cofactor. Zn(2+) is required as a cofactor.

The protein localises to the cytoplasm. The catalysed reaction is 7-phospho-2-dehydro-3-deoxy-D-arabino-heptonate = 3-dehydroquinate + phosphate. It functions in the pathway metabolic intermediate biosynthesis; chorismate biosynthesis; chorismate from D-erythrose 4-phosphate and phosphoenolpyruvate: step 2/7. Catalyzes the conversion of 3-deoxy-D-arabino-heptulosonate 7-phosphate (DAHP) to dehydroquinate (DHQ). The sequence is that of 3-dehydroquinate synthase from Parabacteroides distasonis (strain ATCC 8503 / DSM 20701 / CIP 104284 / JCM 5825 / NCTC 11152).